We begin with the raw amino-acid sequence, 254 residues long: Bax inhibitor 1 homolog (254 aa).

At 1 to 43 the chain is on the cytoplasmic side; it reads MASTSNRNFFSSNMTQIPMDEKIRIALQFNNLSQSTKQTLTKV. A helical membrane pass occupies residues 44–64; it reads YCALAIGILTATVGVLFSMFI. Residues 65 to 66 are Lumenal-facing; sequence YR. Residues 67 to 87 form a helical membrane-spanning segment; sequence PGFLMTLLLVIGSAILFATTP. Topologically, residues 88-98 are cytoplasmic; it reads RTQDYKTQVKR. A helical membrane pass occupies residues 99–119; it reads FTLFNLVTFVTGMSSSGLIEL. Residues 120-126 are Lumenal-facing; that stretch reads YMDINSS. Residues 127–147 form a helical membrane-spanning segment; sequence IVLNAFMATCGIFISFTLFSL. The Cytoplasmic segment spans residues 148 to 152; that stretch reads LTNKR. The chain crosses the membrane as a helical span at residues 153 to 173; it reads LYIFIGSSLASLSIGIFVLAL. The Lumenal portion of the chain corresponds to 174–187; sequence TRLFGGYSEPLDQL. Residues 188 to 208 traverse the membrane as a helical segment; sequence FILAILASSVLFIIFDTQIMV. The Cytoplasmic segment spans residues 209 to 217; sequence HRIENLGEK. An intramembrane region (helical) is located at residues 218–238; the sequence is DVLFHAFILFYDFVDLFRVIL. Topologically, residues 239 to 254 are cytoplasmic; that stretch reads KILAKKENKNNNKSRR.

Belongs to the BI1 family.

It is found in the endoplasmic reticulum membrane. The protein is Bax inhibitor 1 homolog of Dictyostelium discoideum (Social amoeba).